Reading from the N-terminus, the 137-residue chain is Small ribosomal subunit protein eS17 (137 aa).

It belongs to the eukaryotic ribosomal protein eS17 family. In terms of assembly, component of the small ribosomal subunit. Mature ribosomes consist of a small (40S) and a large (60S) subunit. The 40S subunit contains about 32 different proteins and 1 molecule of RNA (18S). The 60S subunit contains 45 different proteins and 3 molecules of RNA (25S, 5.8S and 5S).

It is found in the cytoplasm. Its function is as follows. Component of the ribosome, a large ribonucleoprotein complex responsible for the synthesis of proteins in the cell. The small ribosomal subunit (SSU) binds messenger RNAs (mRNAs) and translates the encoded message by selecting cognate aminoacyl-transfer RNA (tRNA) molecules. The large subunit (LSU) contains the ribosomal catalytic site termed the peptidyl transferase center (PTC), which catalyzes the formation of peptide bonds, thereby polymerizing the amino acids delivered by tRNAs into a polypeptide chain. The nascent polypeptides leave the ribosome through a tunnel in the LSU and interact with protein factors that function in enzymatic processing, targeting, and the membrane insertion of nascent chains at the exit of the ribosomal tunnel. The sequence is that of Small ribosomal subunit protein eS17 (RPS17B) from Candida albicans (strain SC5314 / ATCC MYA-2876) (Yeast).